The following is a 505-amino-acid chain: Maturase K (505 aa).

It belongs to the intron maturase 2 family. MatK subfamily.

The protein resides in the plastid. It localises to the chloroplast. Usually encoded in the trnK tRNA gene intron. Probably assists in splicing its own and other chloroplast group II introns. This Amaranthus greggii (Gregg's amaranth) protein is Maturase K.